Consider the following 660-residue polypeptide: Phosphatidylinositol-3-phosphate phosphatase MTMR7 (660 aa).

The Myotubularin phosphatase domain occupies 126–504 (GWVLIDLSEE…FMYKFWSGMY (379 aa)). The a 1,2-diacyl-sn-glycero-3-phospho-(1D-myo-inositol-3-phosphate) site is built by N250, N275, and I276. Catalysis depends on C338, which acts as the Phosphocysteine intermediate. Residues S339, D340, G341, W342, D343, R344, and R384 each contribute to the a 1,2-diacyl-sn-glycero-3-phospho-(1D-myo-inositol-3-phosphate) site. Positions 514–558 (RQSVTDYLMAVKEETQQLEEELEALEERLEKIQKVQLNCTKVKSK) form a coiled coil. Positions 554-660 (KVKSKQSEPS…DSDEAVFLTA (107 aa)) are disordered. Residues 566–596 (SGFSTSDNSIANTPQDYSGNMKSFPSRSPSQ) are compositionally biased toward polar residues. Residue T578 is modified to Phosphothreonine. Over residues 641 to 653 (APSEDSGKDRDSD) the composition is skewed to basic and acidic residues.

Belongs to the protein-tyrosine phosphatase family. Non-receptor class myotubularin subfamily. As to quaternary structure, heterodimer (via C-terminus) with MTMR9 (via coiled coil domain); the interaction enhances MTMR7 catalytic activity. Does not homodimerize. Interacts with RAB1B (in GDP-bound form).

The protein resides in the cytoplasm. The protein localises to the endomembrane system. It catalyses the reaction a 1,2-diacyl-sn-glycero-3-phospho-(1D-myo-inositol-3-phosphate) + H2O = a 1,2-diacyl-sn-glycero-3-phospho-(1D-myo-inositol) + phosphate. The catalysed reaction is 1D-myo-inositol 1,3-bisphosphate + H2O = 1D-myo-inositol 1-phosphate + phosphate. Its activity is regulated as follows. Interaction with MTMR9 increases phosphatase activity. Its function is as follows. Lipid phosphatase that specifically dephosphorylates the D-3 position of phosphatidylinositol 3-phosphate (PtdIns(3)P) and inositol 1,3-bisphosphate (Ins(1,3)P2). The protein is Phosphatidylinositol-3-phosphate phosphatase MTMR7 of Pongo abelii (Sumatran orangutan).